The sequence spans 159 residues: MADS-box transcription factor 23 (159 aa).

Residues M1–S61 form the MADS-box domain. One can recognise a K-box domain in the interval A86–T159.

Expressed in seedling roots and developing seeds.

It is found in the nucleus. Its function is as follows. Probable transcription factor. This chain is MADS-box transcription factor 23 (MADS23), found in Oryza sativa subsp. japonica (Rice).